We begin with the raw amino-acid sequence, 85 residues long: UPF0291 protein SSA_1878 (85 aa).

Positions G58 to S85 are disordered. Residues T62 to S85 are compositionally biased toward basic and acidic residues.

The protein belongs to the UPF0291 family.

It is found in the cytoplasm. This chain is UPF0291 protein SSA_1878, found in Streptococcus sanguinis (strain SK36).